Reading from the N-terminus, the 291-residue chain is Formamidopyrimidine-DNA glycosylase (291 aa).

Catalysis depends on P2, which acts as the Schiff-base intermediate with DNA. E3 functions as the Proton donor in the catalytic mechanism. The Proton donor; for beta-elimination activity role is filled by K58. DNA is bound by residues H104, R123, and K166. The FPG-type zinc finger occupies 257–291 (KVYDREGEPCPTCGGTVQRFVQNGRSTFWCPKCQK). R281 (proton donor; for delta-elimination activity) is an active-site residue.

This sequence belongs to the FPG family. As to quaternary structure, monomer. It depends on Zn(2+) as a cofactor.

The catalysed reaction is Hydrolysis of DNA containing ring-opened 7-methylguanine residues, releasing 2,6-diamino-4-hydroxy-5-(N-methyl)formamidopyrimidine.. It catalyses the reaction 2'-deoxyribonucleotide-(2'-deoxyribose 5'-phosphate)-2'-deoxyribonucleotide-DNA = a 3'-end 2'-deoxyribonucleotide-(2,3-dehydro-2,3-deoxyribose 5'-phosphate)-DNA + a 5'-end 5'-phospho-2'-deoxyribonucleoside-DNA + H(+). Functionally, involved in base excision repair of DNA damaged by oxidation or by mutagenic agents. Acts as a DNA glycosylase that recognizes and removes damaged bases. Has a preference for oxidized purines, such as 7,8-dihydro-8-oxoguanine (8-oxoG). Has AP (apurinic/apyrimidinic) lyase activity and introduces nicks in the DNA strand. Cleaves the DNA backbone by beta-delta elimination to generate a single-strand break at the site of the removed base with both 3'- and 5'-phosphates. This is Formamidopyrimidine-DNA glycosylase from Rhodopseudomonas palustris (strain ATCC BAA-98 / CGA009).